A 110-amino-acid polypeptide reads, in one-letter code: UPF0122 protein LMOf2365_1829 (110 aa).

Belongs to the UPF0122 family.

Functionally, might take part in the signal recognition particle (SRP) pathway. This is inferred from the conservation of its genetic proximity to ftsY/ffh. May be a regulatory protein. This Listeria monocytogenes serotype 4b (strain F2365) protein is UPF0122 protein LMOf2365_1829.